We begin with the raw amino-acid sequence, 390 residues long: Queuine tRNA-ribosyltransferase (390 aa).

Asp92 acts as the Proton acceptor in catalysis. Substrate-binding positions include Asp92–Phe96, Asp146, Gln195, and Gly222. Positions Gly253–Asp259 are RNA binding. The active-site Nucleophile is Asp272. Positions Thr277 to Arg281 are RNA binding; important for wobble base 34 recognition. The Zn(2+) site is built by Cys310, Cys312, Cys315, and His354.

Belongs to the queuine tRNA-ribosyltransferase family. As to quaternary structure, homodimer. Within each dimer, one monomer is responsible for RNA recognition and catalysis, while the other monomer binds to the replacement base PreQ1. It depends on Zn(2+) as a cofactor.

It carries out the reaction 7-aminomethyl-7-carbaguanine + guanosine(34) in tRNA = 7-aminomethyl-7-carbaguanosine(34) in tRNA + guanine. It functions in the pathway tRNA modification; tRNA-queuosine biosynthesis. Functionally, catalyzes the base-exchange of a guanine (G) residue with the queuine precursor 7-aminomethyl-7-deazaguanine (PreQ1) at position 34 (anticodon wobble position) in tRNAs with GU(N) anticodons (tRNA-Asp, -Asn, -His and -Tyr). Catalysis occurs through a double-displacement mechanism. The nucleophile active site attacks the C1' of nucleotide 34 to detach the guanine base from the RNA, forming a covalent enzyme-RNA intermediate. The proton acceptor active site deprotonates the incoming PreQ1, allowing a nucleophilic attack on the C1' of the ribose to form the product. After dissociation, two additional enzymatic reactions on the tRNA convert PreQ1 to queuine (Q), resulting in the hypermodified nucleoside queuosine (7-(((4,5-cis-dihydroxy-2-cyclopenten-1-yl)amino)methyl)-7-deazaguanosine). The sequence is that of Queuine tRNA-ribosyltransferase from Paracidovorax citrulli (strain AAC00-1) (Acidovorax citrulli).